Here is a 216-residue protein sequence, read N- to C-terminus: V-type ATP synthase subunit D (216 aa).

It belongs to the V-ATPase D subunit family.

Produces ATP from ADP in the presence of a proton gradient across the membrane. This Clostridium botulinum (strain Loch Maree / Type A3) protein is V-type ATP synthase subunit D.